The primary structure comprises 477 residues: Bifunctional protein HldE (477 aa).

The interval 1-318 is ribokinase; sequence MKVTLPEFER…ENAVRGRADT (318 aa). Residue 195 to 198 coordinates ATP; that stretch reads NLSE. Asp-264 is a catalytic residue. The cytidylyltransferase stretch occupies residues 344-477; the sequence is MTNGVFDILH…IKKIQKDSDK (134 aa).

In the N-terminal section; belongs to the carbohydrate kinase PfkB family. The protein in the C-terminal section; belongs to the cytidylyltransferase family. As to quaternary structure, homodimer.

The catalysed reaction is D-glycero-beta-D-manno-heptose 7-phosphate + ATP = D-glycero-beta-D-manno-heptose 1,7-bisphosphate + ADP + H(+). It catalyses the reaction D-glycero-beta-D-manno-heptose 1-phosphate + ATP + H(+) = ADP-D-glycero-beta-D-manno-heptose + diphosphate. Its pathway is nucleotide-sugar biosynthesis; ADP-L-glycero-beta-D-manno-heptose biosynthesis; ADP-L-glycero-beta-D-manno-heptose from D-glycero-beta-D-manno-heptose 7-phosphate: step 1/4. It participates in nucleotide-sugar biosynthesis; ADP-L-glycero-beta-D-manno-heptose biosynthesis; ADP-L-glycero-beta-D-manno-heptose from D-glycero-beta-D-manno-heptose 7-phosphate: step 3/4. Functionally, catalyzes the phosphorylation of D-glycero-D-manno-heptose 7-phosphate at the C-1 position to selectively form D-glycero-beta-D-manno-heptose-1,7-bisphosphate. Its function is as follows. Catalyzes the ADP transfer from ATP to D-glycero-beta-D-manno-heptose 1-phosphate, yielding ADP-D-glycero-beta-D-manno-heptose. This chain is Bifunctional protein HldE, found in Citrobacter koseri (strain ATCC BAA-895 / CDC 4225-83 / SGSC4696).